Reading from the N-terminus, the 210-residue chain is Ribosomal RNA large subunit methyltransferase E (210 aa).

S-adenosyl-L-methionine-binding residues include Gly-64, Trp-66, Asp-84, Asn-100, and Asp-125. Lys-165 functions as the Proton acceptor in the catalytic mechanism.

Belongs to the class I-like SAM-binding methyltransferase superfamily. RNA methyltransferase RlmE family.

The protein resides in the cytoplasm. The enzyme catalyses uridine(2552) in 23S rRNA + S-adenosyl-L-methionine = 2'-O-methyluridine(2552) in 23S rRNA + S-adenosyl-L-homocysteine + H(+). In terms of biological role, specifically methylates the uridine in position 2552 of 23S rRNA at the 2'-O position of the ribose in the fully assembled 50S ribosomal subunit. The polypeptide is Ribosomal RNA large subunit methyltransferase E (Buchnera aphidicola subsp. Baizongia pistaciae (strain Bp)).